We begin with the raw amino-acid sequence, 284 residues long: Hydrogenase expression/formation protein HupQ (284 aa).

Positions methionine 1–leucine 23 are disordered.

This sequence belongs to the HupH/HyaF family.

This chain is Hydrogenase expression/formation protein HupQ (hupQ), found in Azotobacter chroococcum mcd 1.